Consider the following 268-residue polypeptide: Tetraspanin-5 (268 aa).

Residues 1 to 17 (MSGKHYKGPEVSCCIKY) are Cytoplasmic-facing. A helical membrane pass occupies residues 18–38 (FIFGFNVIFWFLGIAFLGIGL). Over 39–61 (WAWNEKGVLSNISSITDLGGFDP) the chain is Extracellular. N-linked (GlcNAc...) asparagine glycosylation occurs at Asn49. The chain crosses the membrane as a helical span at residues 62–82 (VWLFLVVGGVMFILGFAGCIG). Residues 83–92 (ALRENTFLLK) are Cytoplasmic-facing. Residues 93–113 (FFSVFLGIIFFLELTAGVLAF) form a helical membrane-spanning segment. At 114–232 (VFKDWIKDQL…PQFEKWLQDN (119 aa)) the chain is on the extracellular side. 4 disulfides stabilise this stretch: Cys153–Cys221, Cys154–Cys186, Cys170–Cys180, and Cys187–Cys200. N-linked (GlcNAc...) asparagine glycans are attached at residues Asn169 and Asn174. An N-linked (GlcNAc...) asparagine glycan is attached at Asn232. Residues 233–253 (LTIVAGIFIGIALLQIFGICL) form a helical membrane-spanning segment. At 254–268 (AQNLVSDIEAVRASW) the chain is on the cytoplasmic side.

The protein belongs to the tetraspanin (TM4SF) family. Interacts with ADAM10; the interaction influences ADAM10 substrate specificity, endocytosis and turnover. In terms of processing, palmitoylated.

It localises to the cell membrane. In terms of biological role, part of TspanC8 subgroup, composed of 6 members that interact with the transmembrane metalloprotease ADAM10. This interaction is required for ADAM10 exit from the endoplasmic reticulum and for enzymatic maturation and trafficking to the cell surface as well as substrate specificity. Different TspanC8/ADAM10 complexes have distinct substrates. Promotes ADAM10-mediated cleavage of CD44. Seems to regulate VE-cadherin expression in endothelial cells probably through interaction with ADAM10, promoting leukocyte transmigration. The sequence is that of Tetraspanin-5 (TSPAN5) from Bos taurus (Bovine).